We begin with the raw amino-acid sequence, 406 residues long: Aspartokinase (406 aa).

The ACT domain occupies I342–C406.

This sequence belongs to the aspartokinase family.

The enzyme catalyses L-aspartate + ATP = 4-phospho-L-aspartate + ADP. Its pathway is amino-acid biosynthesis; L-lysine biosynthesis via DAP pathway; (S)-tetrahydrodipicolinate from L-aspartate: step 1/4. The protein operates within amino-acid biosynthesis; L-methionine biosynthesis via de novo pathway; L-homoserine from L-aspartate: step 1/3. It participates in amino-acid biosynthesis; L-threonine biosynthesis; L-threonine from L-aspartate: step 1/5. This chain is Aspartokinase (lysC), found in Rickettsia bellii (strain RML369-C).